The sequence spans 325 residues: Pseudouridylate synthase TRUB2, mitochondrial (325 aa).

Residue D101 is the Nucleophile of the active site. The disordered stretch occupies residues 292–325; the sequence is QTEGVSRGNPDREAAEGPIPGPSRGAEGEGELRA.

This sequence belongs to the pseudouridine synthase TruB family.

The protein resides in the mitochondrion matrix. The catalysed reaction is a uridine in mRNA = a pseudouridine in mRNA. It carries out the reaction uridine(55) in tRNA = pseudouridine(55) in tRNA. In terms of biological role, minor enzyme contributing to the isomerization of uridine to pseudouridine (pseudouridylation) of specific mitochondrial mRNAs (mt-mRNAs) such as COXI and COXIII mt-mRNAs, modulating the efficiency of mitochondrial protein synthesis without changes in transcript abundance or stability. Also catalyzes pseudouridylation of some tRNAs, including synthesis of pseudouridine(55) from uracil-55, in the psi GC loop of a subset of tRNAs. This Xenopus tropicalis (Western clawed frog) protein is Pseudouridylate synthase TRUB2, mitochondrial.